A 350-amino-acid chain; its full sequence is UDP-N-acetylenolpyruvoylglucosamine reductase (350 aa).

An FAD-binding PCMH-type domain is found at 24–195 (HVEATARWLL…VAVEFNLPLL (172 aa)). Arg-172 is an active-site residue. Residue Ser-245 is the Proton donor of the active site. Glu-342 is a catalytic residue.

Belongs to the MurB family. Requires FAD as cofactor.

The protein resides in the cytoplasm. It carries out the reaction UDP-N-acetyl-alpha-D-muramate + NADP(+) = UDP-N-acetyl-3-O-(1-carboxyvinyl)-alpha-D-glucosamine + NADPH + H(+). The protein operates within cell wall biogenesis; peptidoglycan biosynthesis. Functionally, cell wall formation. The chain is UDP-N-acetylenolpyruvoylglucosamine reductase from Xanthomonas axonopodis pv. citri (strain 306).